The sequence spans 3253 residues: tRNA nuclease CdiA (3253 aa).

A signal peptide spans 1–32; it reads MHQPPVRFPYRLLSYLISTIIAGQPLLPAVGA. Residues 36–322 are two-partner system transport domain (TPS); sequence PQNGAGMDKA…AGGNLSVTGT (287 aa). Residues 351–1384 are FHA-1; it reads GELTAGQNAM…ITIRTGHLLN (1034 aa). Residues 1385 to 1656 form a receptor binding domain (RBD) region; the sequence is QREGINETKS…DLASGIVEGN (272 aa). Residues 1657-1841 are YP domain; sequence YPLPSGNNGY…LSPKDVTLQN (185 aa). Positions 1842–1902 are periplasmic FHA-1 repeat (pFR); it reads GSIISGQNVH…GLKAMGDINN (61 aa). The segment at 1944 to 2548 is FHA-2; sequence TYTGSIASVS…TSKYDSKQTS (605 aa). 4 disordered regions span residues 2228-2252, 2362-2410, 2483-2503, and 2687-2712; these read GSSKTTHDRREAGTTQSQSASTIGS, TGDP…GKNR, GSEKGNGTEWTETTTDSGKTV, and IRDRDNQKQNPADLSRDPAHANDSIS. Polar residues-rich tracts occupy residues 2240-2252, 2368-2403, and 2490-2503; these read GTTQSQSASTIGS, TGVSLSLTTQKSKSQQHSESDTVSGSTLNAGNNLSV, and TEWTETTTDSGKTV. The segment at 2888–2930 is pretoxin (PT) domain; it reads SDLSEEQKQTISTLATVSAGLAGGLTGNSSASAAVGAQSGKNA. A VDNN CT cleavage motif motif is present at residues 2931-2934; that stretch reads VDNN. Positions 2931-3253 are C-terminal effector domain (CT); the sequence is VDNNYLSVSE…TGIVSNFHPK (323 aa).

This sequence in the N-terminal section; belongs to the CdiA toxin family. It in the C-terminal section; belongs to the bacterial EndoU family. In terms of assembly, forms a 1:1 complex with cognate immunity protein CdiI-STECO31. TRNase activity is metal-independent. serves as cofactor. Post-translationally, the CT domain is cleaved upon binding to receptor Tsx on target cells.

It is found in the secreted. The protein localises to the target cell. Its subcellular location is the target cell cytoplasm. Its function is as follows. Toxic component of a toxin-immunity protein module, which functions as a cellular contact-dependent growth inhibition (CDI) system. CDI modules allow bacteria to communicate with and inhibit the growth of closely related neighboring target bacteria in a contact-dependent fashion (target cell counts decrease 1000- to 10000-fold with this CDI). Uses outer membrane nucleoside transporter Tsx on target cells as a receptor. Gains access to the cytoplasm of target cells by using integral inner membrane protein PTS system glucose-specific EIICB component (ptsG). Targeting of the C-terminal domain (CT) domain (residues 2931-3253) in the absence of immunity protein inhibits cell growth and causes tRNA(UUC-Glu) cleavage; expression of cognate immunity protein CdiI-STECO31 neutralizes growth inhibition leaving tRNA(UUC-Glu) is intact, whereas non-cognate immunity proteins do not confer protection. The CT domain cleaves tRNA; it is most active against tRNA(UUC-Glu), but also has modest activity against tRNA(GUC-Asp), tRNA(UUG-Gln), tRNA(CCC-Gly), tRNA(UCC-Gly), tRNA(GCC-Gly), tRNA(UUU-Lys), tRNA(GGU-Thr) and tRNA(CCA-Trp); tRNA cleavage is inhibited by cognate immunity protein CdiI. Cleavage of tRNA(UUC-Glu) occurs in the anticodon loop between cytosine(37) and 2-methyladenosine(38) (C37-m2A38) and probably also occurs in the anticodon loop of other tRNAs as well. The CdiA protein is thought to be exported from the cell through the central lumen of CdiB, the other half of its two-partner system (TPS). The TPS domain probably remains associated with CdiB while the FHA-1 domain forms an extended filament (33 nm long) with the receptor-binding domain (RBD) at its extremity; in the secretion arrested state the C-terminus of the RBD and YP domains form a hairpin-like structure as the FHA-2, PT and CT domains are periplasmic. The YP domain is probably responsible for this arrest at the point where it re-enters the host cell periplasm. Upon binding to a target cell outer membrane receptor (Tsx for this CDI) a signal is transmitted to activate secretion. The filament becomes about 5 nm longer, the rest of CdiA is secreted and the FHA-2 domain becomes stably associated with the target cell's outer membrane where it facilitates entry of the toxic CT domain into the target cell periplasm. From there the toxic CT domain is cleaved and gains access to the target cell cytoplasm via an inner membrane protein (PTS system glucose-specific EIICB component, ptsG for this CDI). The sequence is that of tRNA nuclease CdiA from Escherichia coli (strain STEC_O31).